Here is a 674-residue protein sequence, read N- to C-terminus: Ribosome biogenesis protein BOP1 homolog (674 aa).

The disordered stretch occupies residues 1–28 (MASTSAATPLKNKRKFENGKKKPKTLKD). Over residues 15–28 (KFENGKKKPKTLKD) the composition is skewed to basic and acidic residues. 7 WD repeats span residues 342-384 (GHTG…KTFQ), 386-425 (DGEV…RLHV), 427-458 (QTEA…LMLK), 459-500 (MPNE…SQCP), 503-541 (KRKG…LVKK), 587-626 (HHTA…DFVK), and 643-674 (PNDL…LFTY).

The protein belongs to the WD repeat BOP1/ERB1 family.

The protein localises to the nucleus. Its subcellular location is the nucleolus. It is found in the nucleoplasm. Required for maturation of ribosomal RNAs and formation of the large ribosomal subunit. This chain is Ribosome biogenesis protein BOP1 homolog, found in Caenorhabditis elegans.